The chain runs to 173 residues: Adenine phosphoribosyltransferase (173 aa).

The protein belongs to the purine/pyrimidine phosphoribosyltransferase family. As to quaternary structure, homodimer.

The protein localises to the cytoplasm. It catalyses the reaction AMP + diphosphate = 5-phospho-alpha-D-ribose 1-diphosphate + adenine. The protein operates within purine metabolism; AMP biosynthesis via salvage pathway; AMP from adenine: step 1/1. Functionally, catalyzes a salvage reaction resulting in the formation of AMP, that is energically less costly than de novo synthesis. This Thermoanaerobacter pseudethanolicus (strain ATCC 33223 / 39E) (Clostridium thermohydrosulfuricum) protein is Adenine phosphoribosyltransferase.